Reading from the N-terminus, the 1488-residue chain is Phenolphthiocerol/phthiocerol polyketide synthase subunit E (1488 aa).

Residues 5–438 enclose the Ketosynthase family 3 (KS3) domain; that stretch reads ENAIAVVGMA…GTNAHVVLEE (434 aa). Catalysis depends on for beta-ketoacyl synthase activity residues C184, H320, and H361. The acyltransferase stretch occupies residues 551–868; it reads VFLFPGQGAQ…GELWSAGVEV (318 aa). S641 acts as the For malonyltransferase activity in catalysis. The region spanning 930-1004 is the Carrier domain; that stretch reads NGESQTEVTL…SLTAAVDASF (75 aa). S965 carries the O-(pantetheine 4'-phosphoryl)serine modification. 1286–1331 is a binding site for NADP(+); it reads EGVVAVELEGEGRSVLRPDVDLRRTVGWFTTYYPVPLACATGLGAL.

It depends on NADP(+) as a cofactor. Pantetheine 4'-phosphate serves as cofactor.

The catalysed reaction is icosanoyl-[(phenol)carboxyphthiodiolenone synthase] + 2 (S)-methylmalonyl-CoA + 3 malonyl-CoA + 5 NADPH + 10 H(+) = C32-carboxyphthiodiolenone-[(phenol)carboxyphthiodiolenone synthase] + 5 CO2 + 5 NADP(+) + 5 CoA + 2 H2O. It catalyses the reaction docosanoyl-[(phenol)carboxyphthiodiolenone synthase] + 2 (S)-methylmalonyl-CoA + 3 malonyl-CoA + 5 NADPH + 10 H(+) = C34-carboxyphthiodiolenone-[(phenol)carboxyphthiodiolenone synthase] + 5 CO2 + 5 NADP(+) + 5 CoA + 2 H2O. It carries out the reaction 17-(4-hydroxyphenyl)heptadecanoyl-[(phenol)carboxyphthiodiolenone synthase] + 2 (S)-methylmalonyl-CoA + 3 malonyl-CoA + 5 NADPH + 10 H(+) = C35-(phenol)carboxyphthiodiolenone-[(phenol)carboxyphthiodiolenone synthase] + 5 CO2 + 5 NADP(+) + 5 CoA + 2 H2O. The enzyme catalyses 19-(4-hydroxyphenyl)nonadecanoyl-[(phenol)carboxyphthiodiolenone synthase] + 2 (S)-methylmalonyl-CoA + 3 malonyl-CoA + 5 NADPH + 10 H(+) = C37-(phenol)carboxyphthiodiolenone-[(phenol)carboxyphthiodiolenone synthase] + 5 CO2 + 5 NADP(+) + 5 CoA + 2 H2O. Its pathway is lipid metabolism; fatty acid biosynthesis. Functionally, part of the PpsABCDE complex involved in the biosynthesis of the lipid core common to phthiocerols and phenolphthiocerols by successive additions of malonyl-CoA or methylmalonyl-CoA extender units. PpsA can accept as substrate the activated forms of either icosanoyl (C20), docosanoyl (C22) or lignoceroyl (C24) groups from FadD26, or a (4-hydroxyphenyl)-C17 or (4-hydroxyphenyl)-C19 fatty acyl from FadD29. PpsA initiates the biosynthesis and extends its substrate using a malonyl-CoA extender unit. The PpsB and PpsC proteins add the second and third malonyl-CoA extender units. PpsD adds an (R)-methylmalonyl unit and PpsE adds a second (R)-methylmalonyl unit. The incorporation of the methylmalonyl units results in formation of two branched methyl groups in the elongated product. This chain is Phenolphthiocerol/phthiocerol polyketide synthase subunit E (ppsE), found in Mycobacterium bovis (strain ATCC BAA-935 / AF2122/97).